We begin with the raw amino-acid sequence, 838 residues long: Probable beta-glucosidase K (838 aa).

N-linked (GlcNAc...) asparagine glycosylation occurs at N19. Residue D232 is part of the active site. 2 N-linked (GlcNAc...) asparagine glycosylation sites follow: N324 and N489. Residues 405–564 form the PA14 domain; that stretch reads EGQPGLRMRF…DPELAIARAV (160 aa).

Belongs to the glycosyl hydrolase 3 family.

It localises to the secreted. The enzyme catalyses Hydrolysis of terminal, non-reducing beta-D-glucosyl residues with release of beta-D-glucose.. It participates in glycan metabolism; cellulose degradation. Its function is as follows. Beta-glucosidases are one of a number of cellulolytic enzymes involved in the degradation of cellulosic biomass. Catalyzes the last step releasing glucose from the inhibitory cellobiose. This is Probable beta-glucosidase K (bglK) from Emericella nidulans (strain FGSC A4 / ATCC 38163 / CBS 112.46 / NRRL 194 / M139) (Aspergillus nidulans).